Reading from the N-terminus, the 246-residue chain is Ribosome maturation factor RimM (246 aa).

The segment covering 1 to 15 (MKRKQESKGAGEKRQ) has biased composition (basic and acidic residues). The interval 1–63 (MKRKQESKGA…NPQFTTPNPD (63 aa)) is disordered. The segment covering 45 to 54 (VPSPQSPIPN) has biased composition (pro residues). The PRC barrel domain maps to 158 to 239 (GEDEYHVVDL…RIEITPPPGL (82 aa)).

Belongs to the RimM family. Binds ribosomal protein uS19.

The protein resides in the cytoplasm. An accessory protein needed during the final step in the assembly of 30S ribosomal subunit, possibly for assembly of the head region. Essential for efficient processing of 16S rRNA. May be needed both before and after RbfA during the maturation of 16S rRNA. It has affinity for free ribosomal 30S subunits but not for 70S ribosomes. In Nostoc sp. (strain PCC 7120 / SAG 25.82 / UTEX 2576), this protein is Ribosome maturation factor RimM.